The chain runs to 291 residues: MALAVRLLPRLLLSRPLPGWAARLRTLSSAEVKRPLSGLCYLCRRRLGSGAAPFPRVSWASAALALSARGPQRPLLSPLEVASTLPTFPSCPRRTYSTEEQPQQRQKTKMIILGFSNPINWVRTRIYSFLIWAYFDQEFSITEFSEGAKQAFAHVSKLLSQCKFDLLEELVAKETLHVLKEKVTSLPDNHKNALAADIDEIVYTSTGDISIYYDEKGRKFVNILMCFWYLTSANIPSEAISGARVFQVKLGDQNVETKQLLSASYEFQREFTQGVKPDWTIARIEHPKLLE.

A mitochondrion-targeting transit peptide spans Met1–Tyr96.

In terms of assembly, interacts with AFG3L2. Interacts with SPG7. Interacts with SMDT1/EMRE (via the N-terminal transit peptide); interaction is direct and takes place before maturation of SMDT1/EMRE.

Its subcellular location is the mitochondrion matrix. In terms of biological role, promotes sorting of SMDT1/EMRE in mitochondria by ensuring its maturation. Interacts with the transit peptide region of SMDT1/EMRE precursor protein in the mitochondrial matrix, leading to protect it against protein degradation by YME1L1, thereby ensuring SMDT1/EMRE maturation by the mitochondrial processing peptidase (PMPCA and PMPCB). The chain is m-AAA protease-interacting protein 1, mitochondrial from Bos taurus (Bovine).